The chain runs to 310 residues: MRILFLGSPSFAVHALEALVAAGHEIVGVVTQPDRPAGRDRRLTPPPVKIAAMAHNLPVLQPETLRDPTVVETLSALQPEVGVVAAYGEILRRAVLSIPPLGYLNIHPSLLPLYRGPTPVAGAILAGETVTGVTIMLLDPSMDSGPILAQAVVDLPPTARAGQLTDELFRIGADLLVQVLPRYARGEIEPRPQDHSRATVTKMLKKEDGRIDWSLPAIVIERMTRAYDPWPGAYTFWRGQPLRIIKAAVASADGTNVPGTVIGRSGSGHPLVQTGSDALELIEVQPASRRPMSGSAWLAGVHADNIRLGE.

109 to 112 (SLLP) provides a ligand contact to (6S)-5,6,7,8-tetrahydrofolate.

Belongs to the Fmt family.

It catalyses the reaction L-methionyl-tRNA(fMet) + (6R)-10-formyltetrahydrofolate = N-formyl-L-methionyl-tRNA(fMet) + (6S)-5,6,7,8-tetrahydrofolate + H(+). In terms of biological role, attaches a formyl group to the free amino group of methionyl-tRNA(fMet). The formyl group appears to play a dual role in the initiator identity of N-formylmethionyl-tRNA by promoting its recognition by IF2 and preventing the misappropriation of this tRNA by the elongation apparatus. The sequence is that of Methionyl-tRNA formyltransferase from Chloroflexus aurantiacus (strain ATCC 29366 / DSM 635 / J-10-fl).